We begin with the raw amino-acid sequence, 107 residues long: UPF0145 protein YbjQ (107 aa).

It belongs to the UPF0145 family.

The polypeptide is UPF0145 protein YbjQ (Shigella flexneri).